The sequence spans 325 residues: Putative 1-aminocyclopropane-1-carboxylate deaminase (325 aa).

The residue at position 54 (lysine 54) is an N6-(pyridoxal phosphate)lysine.

The protein belongs to the ACC deaminase/D-cysteine desulfhydrase family. The cofactor is pyridoxal 5'-phosphate.

The catalysed reaction is 1-aminocyclopropane-1-carboxylate + H2O = 2-oxobutanoate + NH4(+). This is Putative 1-aminocyclopropane-1-carboxylate deaminase from Pyrococcus horikoshii (strain ATCC 700860 / DSM 12428 / JCM 9974 / NBRC 100139 / OT-3).